Reading from the N-terminus, the 557-residue chain is Copine-6 (557 aa).

2 C2 domains span residues 1–127 (MSDP…TKPL) and 134–263 (NAGK…MQWD). Ca(2+)-binding residues include aspartate 167, aspartate 173, aspartate 229, aspartate 231, and aspartate 237. The tract at residues 244–303 (STFQEMQEGTANPGQEMQWDCINPKYRDKKKHYKSSGTVVLAQCTVEKVHTFLDYIMGGC) is linker region. The 221-residue stretch at 306–526 (SFTVAIDFTA…ALAKCVLAEV (221 aa)) folds into the VWFA domain.

It belongs to the copine family. In terms of assembly, interacts (via second C2 domain) with OS9 (via C-terminus); this interaction occurs in a calcium-dependent manner in vitro. May interact with NECAB1. Requires Ca(2+) as cofactor.

It localises to the cytoplasm. The protein resides in the cell membrane. The protein localises to the endosome. It is found in the cytoplasmic vesicle. Its subcellular location is the clathrin-coated vesicle. It localises to the perikaryon. The protein resides in the cell projection. The protein localises to the dendrite. Its function is as follows. Calcium-dependent phospholipid-binding protein that plays a role in calcium-mediated intracellular processes. Binds phospholipid membranes in a calcium-dependent manner. Plays a role in dendrite formation by melanocytes. The protein is Copine-6 of Bos taurus (Bovine).